We begin with the raw amino-acid sequence, 381 residues long: Spindlin interactor and repressor of chromatin-binding protein (381 aa).

A Glycyl lysine isopeptide (Lys-Gly) (interchain with G-Cter in SUMO2) cross-link involves residue K49. Phosphoserine occurs at positions 122 and 149. Over residues 148 to 158 the composition is skewed to polar residues; it reads PSLPSLESGQD. A disordered region spans residues 148 to 170; it reads PSLPSLESGQDGQPDPISNPDPV. Glycyl lysine isopeptide (Lys-Gly) (interchain with G-Cter in SUMO2) cross-links involve residues K190 and K221. Disordered stretches follow at residues 203 to 270, 285 to 320, and 335 to 381; these read PVTP…TDGS, LRTTDCKDSSKDSRAAEGLPQPQNPSSASPPGLRGT, and AVSL…GSGV. The span at 219 to 229 shows a compositional bias: basic and acidic residues; sequence RWKESPENEPA. A phosphoserine mark is found at S249 and S252. The segment covering 288 to 299 has biased composition (basic and acidic residues); that stretch reads TDCKDSSKDSRA. Residues K291 and K295 each participate in a glycyl lysine isopeptide (Lys-Gly) (interchain with G-Cter in SUMO2) cross-link. The segment covering 304–315 has biased composition (low complexity); the sequence is PQPQNPSSASPP. 2 positions are modified to phosphoserine: S310 and S313.

In terms of assembly, interacts with SPIN1, SPIN2A, SPIN2B, SPIN3 and SPIN4. Interacts with TCF7L2 in a SPIN1-dependent manner. Interacts with PARP1; promoting PARP1 ADP-ribosyltransferase activity.

It localises to the nucleus. Its subcellular location is the chromosome. Its function is as follows. Chromatin protein that stabilizes SPIN1 and enhances its association with histone H3 trimethylated at both 'Lys-4' and 'Lys-9' (H3K4me3K9me3). Positively regulates poly-ADP-ribosylation in response to DNA damage; acts by facilitating PARP1 ADP-ribosyltransferase activity. This chain is Spindlin interactor and repressor of chromatin-binding protein, found in Mus musculus (Mouse).